The sequence spans 397 residues: MFRDRTNLFLSYRRTFPHNITFSSGKAPLGDDQDIEMGTYPMMNMSHDISARLTDERKNKHENHSDALPPIFIDIAQDVDDYLLEVRRLSEQLAKVYRKNSLPGFEDKSHDEALIEDLSFKVIQMLQKCYAVMKRLKTIYNSQFVDGKQLSREELIILDNLQKIYAEKIQTESNKFRVLQNNYLKFLNKDDLKPIRNKASAENTLLLDDEEEEAAREKREGLDIEDYSKRTLQRQQQLHDTSAEAYLRERDEEITQLARGVLEVSTIFREMQDLVVDQGTIVDRIDYNLENTVVELKSADKELNKATHYQKRTQKCKVILLLTLCVIALFFFVMLKPHGGGSGGRNNGSNKYNNDDNKTVNNSHDDGSNTHINDEESNLPSIVEVTESENDALDDLL.

Residues M1–K317 lie on the Cytoplasmic side of the membrane. The stretch at D74–V96 forms a coiled coil. S109 is modified (phosphoserine). Residues E244–A306 enclose the t-SNARE coiled-coil homology domain. Residues V318–H338 traverse the membrane as a helical; Anchor for type IV membrane protein segment. Residues G339–L397 are Vesicular-facing. The tract at residues G341–L397 is disordered. A compositionally biased stretch (basic and acidic residues) spans N353–D374. Acidic residues predominate over residues T386–L397.

It belongs to the syntaxin family. In terms of assembly, interacts with VPS45.

The protein resides in the golgi apparatus. Its subcellular location is the trans-Golgi network membrane. The protein localises to the endosome membrane. T-SNARE that functions in transport from the endosome to the late Golgi and on the endocytic pathway. The polypeptide is t-SNARE affecting a late Golgi compartment protein 2 (TLG2) (Saccharomyces cerevisiae (strain ATCC 204508 / S288c) (Baker's yeast)).